The primary structure comprises 220 residues: Metalloproteinase inhibitor 2 (220 aa).

An N-terminal signal peptide occupies residues 1-26 (MGAAARSLPLAFCLLLLGTLLPRADA). Cys-27 contributes to the Zn(2+) binding site. The tract at residues 27 to 30 (CSCS) is involved in metalloproteinase-binding. Intrachain disulfides connect Cys-27-Cys-98, Cys-29-Cys-127, Cys-39-Cys-152, Cys-154-Cys-201, Cys-159-Cys-164, and Cys-172-Cys-193. Residues 27–152 (CSCSPVHPQQ…SLNHRYQMGC (126 aa)) enclose the NTR domain.

It belongs to the protease inhibitor I35 (TIMP) family. As to quaternary structure, interacts (via the C-terminal) with MMP2 (via the C-terminal PEX domain); the interaction inhibits the MMP2 activity. In terms of processing, the activity of TIMP2 is dependent on the presence of disulfide bonds.

It is found in the secreted. Complexes with metalloproteinases (such as collagenases) and irreversibly inactivates them by binding to their catalytic zinc cofactor. The sequence is that of Metalloproteinase inhibitor 2 (TIMP2) from Bos taurus (Bovine).